The primary structure comprises 174 residues: NADH-ubiquinone oxidoreductase chain 6 (174 aa).

Transmembrane regions (helical) follow at residues 4-24 (LIIMTICLIISFIFMQMKHPL), 25-45 (SMGLMLLTQTFLTCLLTGIYV), 48-68 (FWFSYVLFLIFLGGMLILFIY), 82-102 (FNLTTLSLLIFFLMTLFFFII), and 143-163 (LITLLLINYLFLTLLVTVKIT).

The protein belongs to the complex I subunit 6 family.

It localises to the mitochondrion membrane. The enzyme catalyses a ubiquinone + NADH + 5 H(+)(in) = a ubiquinol + NAD(+) + 4 H(+)(out). Core subunit of the mitochondrial membrane respiratory chain NADH dehydrogenase (Complex I) that is believed to belong to the minimal assembly required for catalysis. Complex I functions in the transfer of electrons from NADH to the respiratory chain. The immediate electron acceptor for the enzyme is believed to be ubiquinone. This is NADH-ubiquinone oxidoreductase chain 6 (ND6) from Anopheles quadrimaculatus (Common malaria mosquito).